Here is an 892-residue protein sequence, read N- to C-terminus: Alanine--tRNA ligase (892 aa).

Residues histidine 593, histidine 597, cysteine 694, and histidine 698 each coordinate Zn(2+).

This sequence belongs to the class-II aminoacyl-tRNA synthetase family. Zn(2+) serves as cofactor.

Its subcellular location is the cytoplasm. It catalyses the reaction tRNA(Ala) + L-alanine + ATP = L-alanyl-tRNA(Ala) + AMP + diphosphate. Its function is as follows. Catalyzes the attachment of alanine to tRNA(Ala) in a two-step reaction: alanine is first activated by ATP to form Ala-AMP and then transferred to the acceptor end of tRNA(Ala). Also edits incorrectly charged Ser-tRNA(Ala) and Gly-tRNA(Ala) via its editing domain. This Helicobacter hepaticus (strain ATCC 51449 / 3B1) protein is Alanine--tRNA ligase.